Here is a 256-residue protein sequence, read N- to C-terminus: uncharacterized protein (256 aa).

Residues 10–64 (IRALRESRDWSLADLAAATGVSTMGLSYLERGARKPHKSTVQKVENGLGLPPGTY) enclose the HTH cro/C1-type domain. A DNA-binding region (H-T-H motif) is located at residues 21–40 (LADLAAATGVSTMGLSYLER).

This is an uncharacterized protein from Mycobacterium bovis (strain ATCC BAA-935 / AF2122/97).